Consider the following 100-residue polypeptide: ATP synthase subunit c (100 aa).

2 helical membrane-spanning segments follow: residues 27-47 and 72-92; these read SVIA…IGMG and FIAL…TLIV.

The protein belongs to the ATPase C chain family. F-type ATPases have 2 components, F(1) - the catalytic core - and F(0) - the membrane proton channel. F(1) has five subunits: alpha(3), beta(3), gamma(1), delta(1), epsilon(1). F(0) has three main subunits: a(1), b(2) and c(10-14). The alpha and beta chains form an alternating ring which encloses part of the gamma chain. F(1) is attached to F(0) by a central stalk formed by the gamma and epsilon chains, while a peripheral stalk is formed by the delta and b chains.

The protein resides in the cell inner membrane. F(1)F(0) ATP synthase produces ATP from ADP in the presence of a proton or sodium gradient. F-type ATPases consist of two structural domains, F(1) containing the extramembraneous catalytic core and F(0) containing the membrane proton channel, linked together by a central stalk and a peripheral stalk. During catalysis, ATP synthesis in the catalytic domain of F(1) is coupled via a rotary mechanism of the central stalk subunits to proton translocation. Functionally, key component of the F(0) channel; it plays a direct role in translocation across the membrane. A homomeric c-ring of between 10-14 subunits forms the central stalk rotor element with the F(1) delta and epsilon subunits. The polypeptide is ATP synthase subunit c (Campylobacter concisus (strain 13826)).